Consider the following 268-residue polypeptide: Zinc transporter ZupT (268 aa).

8 helical membrane-spanning segments follow: residues 5–25, 38–58, 72–92, 124–144, 152–172, 187–207, 211–231, and 248–268; these read ILFAFSLTLLAGLATGIGSII, TVSLGFSAGVMLYVSMIEIFV, AGYIWTVIAFFVGIFVIALID, MGLFSALAIGIHNFPEGLATF, TLGISIAVAIAIHNIPEGLAV, FVLSFLSGLAEPIGAIAGFFL, LFTELTFGLVFASVAGIMVYI, and LAIGGLVGGMLVMAVSLLLFL. Fe(2+) is bound by residues Asn136 and Glu139. Residues Glu139 and His164 each contribute to the Zn(2+) site. Residues Asn165, Glu168, and Glu197 each coordinate Fe(2+). Glu168 is a binding site for Zn(2+).

The protein belongs to the ZIP transporter (TC 2.A.5) family. ZupT subfamily.

The protein localises to the cell inner membrane. It catalyses the reaction Zn(2+)(in) = Zn(2+)(out). In terms of biological role, mediates zinc uptake. May also transport other divalent cations. This chain is Zinc transporter ZupT, found in Chlorobaculum parvum (strain DSM 263 / NCIMB 8327) (Chlorobium vibrioforme subsp. thiosulfatophilum).